A 298-amino-acid chain; its full sequence is GTPase Era (298 aa).

One can recognise an Era-type G domain in the interval 8-176 (RCGRIAVIGR…VSDLLALLPE (169 aa)). Positions 16-23 (GRPNVGKS) are G1. Position 16–23 (16–23 (GRPNVGKS)) interacts with GTP. The segment at 42-46 (QTTRH) is G2. A G3 region spans residues 63–66 (DTPG). GTP contacts are provided by residues 63–67 (DTPGL) and 125–128 (NKID). A G4 region spans residues 125 to 128 (NKID). The tract at residues 155-157 (VSA) is G5. In terms of domain architecture, KH type-2 spans 199-283 (VREQVMRQLG…FLETWVRVRK (85 aa)).

This sequence belongs to the TRAFAC class TrmE-Era-EngA-EngB-Septin-like GTPase superfamily. Era GTPase family. As to quaternary structure, monomer.

It is found in the cytoplasm. Its subcellular location is the cell inner membrane. An essential GTPase that binds both GDP and GTP, with rapid nucleotide exchange. Plays a role in 16S rRNA processing and 30S ribosomal subunit biogenesis and possibly also in cell cycle regulation and energy metabolism. The chain is GTPase Era from Xylella fastidiosa (strain Temecula1 / ATCC 700964).